A 111-amino-acid polypeptide reads, in one-letter code: Nucleoid-associated protein SynRCC307_0025 (111 aa).

The protein belongs to the YbaB/EbfC family. As to quaternary structure, homodimer.

It localises to the cytoplasm. The protein localises to the nucleoid. Functionally, binds to DNA and alters its conformation. May be involved in regulation of gene expression, nucleoid organization and DNA protection. This is Nucleoid-associated protein SynRCC307_0025 from Synechococcus sp. (strain RCC307).